Here is a 183-residue protein sequence, read N- to C-terminus: Somatotropin (183 aa).

His19 is a binding site for Zn(2+). A disordered region spans residues 38–67; it reads EEQRHSHKSSPSAFCQSETIPAPTGKEDAQ. Residues 46–56 show a composition bias toward polar residues; it reads SSPSAFCQSET. Cys52 and Cys156 form a disulfide bridge. Residue Glu165 participates in Zn(2+) binding. A disulfide bond links Cys173 and Cys181.

The protein belongs to the somatotropin/prolactin family.

It is found in the secreted. In terms of biological role, growth hormone plays an important role in growth control and is involved in the regulation of several anabolic processes. Implicated as an osmoregulatory substance important for seawater adaptation. The chain is Somatotropin (gh) from Prionace glauca (Blue shark).